A 420-amino-acid chain; its full sequence is Histidine--tRNA ligase, chloroplastic (420 aa).

Belongs to the class-II aminoacyl-tRNA synthetase family.

It localises to the plastid. It is found in the chloroplast. It catalyses the reaction tRNA(His) + L-histidine + ATP = L-histidyl-tRNA(His) + AMP + diphosphate + H(+). In Gracilaria tenuistipitata var. liui (Red alga), this protein is Histidine--tRNA ligase, chloroplastic.